Reading from the N-terminus, the 351-residue chain is MSPEYFLRSLLLIILATFSANASNWLYLAKLSSVGSISEEETCEKLKGLIQRQVQMCKRNLEVMDSVRRGAQLAIEECQYQFRNRRWNCSTLDTLPVFGKVVTQGTREAAFVYAISSAGVAFAVTRACSSGELDKCGCDRTVQGGSPQGFQWSGCSDNIAYGVAFSQSFVDVRERSKGASSNRALMNLHNNEAGRKAILNNMRVECKCHGVSGSCEFKTCWKAMPPFRKVGNVLKEKFDGATEVEQSEIGSTKVLVPKNSQFKPHTDEDLVYLDSSPDFCDHDLKNGVLGTSGRQCNKTSKAIDGCELMCCGRGFHTDEVEVVERCSCKFHWCCSVKCKPCHRVVEIHTCR.

A signal peptide spans 1–22; the sequence is MSPEYFLRSLLLIILATFSANA. 2 N-linked (GlcNAc...) asparagine glycosylation sites follow: Asn-21 and Asn-88. Intrachain disulfides connect Cys-78–Cys-89, Cys-128–Cys-136, Cys-138–Cys-155, Cys-206–Cys-220, Cys-208–Cys-215, Cys-280–Cys-311, Cys-296–Cys-306, Cys-310–Cys-350, Cys-326–Cys-341, Cys-328–Cys-338, and Cys-333–Cys-334. A lipid anchor (O-palmitoleoyl serine; by PORCN) is attached at Ser-212. N-linked (GlcNAc...) asparagine glycosylation is present at Asn-297.

This sequence belongs to the Wnt family. Interacts with CPZ. Post-translationally, palmitoleoylation is required for efficient binding to frizzled receptors. Depalmitoleoylation leads to Wnt signaling pathway inhibition. Predominantly expressed in the diencephalon neuromere D2.

Its subcellular location is the secreted. The protein localises to the extracellular space. It localises to the extracellular matrix. In terms of biological role, ligand for members of the frizzled family of seven transmembrane receptors. Plays an important role in embryonic development. The chain is Protein Wnt-4 (WNT4) from Gallus gallus (Chicken).